We begin with the raw amino-acid sequence, 261 residues long: tRNA 5-carboxymethoxyuridine methyltransferase (261 aa).

S-adenosyl-L-methionine is bound by residues Arg26, 52–53, Asp73, 102–103, and His119; these read GG and AQ.

The protein belongs to the class I-like SAM-binding methyltransferase superfamily. CmoM family.

It carries out the reaction 5-carboxymethoxyuridine(34) in tRNA + S-adenosyl-L-methionine = 5-methoxycarbonylmethoxyuridine(34) in tRNA + S-adenosyl-L-homocysteine. In terms of biological role, catalyzes the methylation of 5-carboxymethoxyuridine (cmo5U) to form 5-methoxycarbonylmethoxyuridine (mcmo5U) at position 34 in tRNAs. Four tRNAs (tRNA(Ala1), tRNA(Ser1), tRNA(Pro3) and tRNA(Thr4)) are fully modified with mcmo5U in stationary-phase E.coli. Also present at low frequency in tRNA(Leu3) and tRNA(Val1). This Escherichia coli (strain K12) protein is tRNA 5-carboxymethoxyuridine methyltransferase.